The sequence spans 105 residues: uncharacterized protein (105 aa).

A helical transmembrane segment spans residues 64–84 (ILLISIFFLLLFALPQHTMGI).

It is found in the membrane. This is an uncharacterized protein from Saccharomyces cerevisiae (strain ATCC 204508 / S288c) (Baker's yeast).